The chain runs to 343 residues: MTITPQEALQRTIEHREIFHDEMLHLMRLIMRGDLSPVMAAAIITGLRVKKETIGEIAAAATVMREFANHVEVQDNSNFVDIVGTGGDGSHTFNISTASMFVTAAAGAKVAKHGNRGVSSKSGSADVLEALGVNIDLQSDQVAASIAETGMGFMFAPNHHPAMKNIAAVRRELGVRTIFNILGPLTNPAGAPNQLMGVFHPDLVGIQVRVMQRLGAQHVLVVYGKDGMDEVSLGAATLVGELRDGKVHEYEIHPEDFGLQMVSNRTLKVENADESRTMLLGALDNQPGVAREIVTLNAGTALYAANIAESIADGIQLAREAIASGKARAKVDELVRFTQQFKR.

Residues Gly84, 87–88 (GD), Thr92, 94–97 (NIST), 112–120 (KHGNRGVSS), and Ser124 contribute to the 5-phospho-alpha-D-ribose 1-diphosphate site. Gly84 lines the anthranilate pocket. A Mg(2+)-binding site is contributed by Ser96. Asn115 serves as a coordination point for anthranilate. Anthranilate is bound at residue Arg170. Asp229 and Glu230 together coordinate Mg(2+).

This sequence belongs to the anthranilate phosphoribosyltransferase family. Homodimer. It depends on Mg(2+) as a cofactor.

The catalysed reaction is N-(5-phospho-beta-D-ribosyl)anthranilate + diphosphate = 5-phospho-alpha-D-ribose 1-diphosphate + anthranilate. Its pathway is amino-acid biosynthesis; L-tryptophan biosynthesis; L-tryptophan from chorismate: step 2/5. Catalyzes the transfer of the phosphoribosyl group of 5-phosphorylribose-1-pyrophosphate (PRPP) to anthranilate to yield N-(5'-phosphoribosyl)-anthranilate (PRA). The polypeptide is Anthranilate phosphoribosyltransferase (Burkholderia orbicola (strain MC0-3)).